An 878-amino-acid chain; its full sequence is Aconitate hydratase A (878 aa).

[4Fe-4S] cluster-binding residues include C426, C492, and C495.

The protein belongs to the aconitase/IPM isomerase family. In terms of assembly, monomer. [4Fe-4S] cluster is required as a cofactor.

The catalysed reaction is citrate = D-threo-isocitrate. It carries out the reaction (2S,3R)-3-hydroxybutane-1,2,3-tricarboxylate = 2-methyl-cis-aconitate + H2O. The protein operates within carbohydrate metabolism; tricarboxylic acid cycle; isocitrate from oxaloacetate: step 2/2. Its pathway is organic acid metabolism; propanoate degradation. Involved in the catabolism of short chain fatty acids (SCFA) via the tricarboxylic acid (TCA)(acetyl degradation route) and probably the 2-methylcitrate cycle I (propionate degradation route). Catalyzes the reversible isomerization of citrate to isocitrate via cis-aconitate. Could catalyze the hydration of 2-methyl-cis-aconitate to yield (2R,3S)-2-methylisocitrate. The apo form of AcnA functions as a RNA-binding regulatory protein. The sequence is that of Aconitate hydratase A (acnA) from Rickettsia prowazekii (strain Madrid E).